Consider the following 530-residue polypeptide: Probable phosphoacetylglucosamine mutase (530 aa).

Catalysis depends on serine 62, which acts as the Phosphoserine intermediate. Residues serine 62, aspartate 278, aspartate 280, and aspartate 282 each contribute to the Mg(2+) site. Residues 369-371, 481-485, and arginine 490 contribute to the substrate site; these read EPN and RPSGT.

Belongs to the phosphohexose mutase family. The cofactor is Mg(2+).

It catalyses the reaction N-acetyl-alpha-D-glucosamine 1-phosphate = N-acetyl-D-glucosamine 6-phosphate. It participates in nucleotide-sugar biosynthesis; UDP-N-acetyl-alpha-D-glucosamine biosynthesis; N-acetyl-alpha-D-glucosamine 1-phosphate from alpha-D-glucosamine 6-phosphate (route I): step 2/2. Functionally, catalyzes the conversion of GlcNAc-6-P into GlcNAc-1-P during the synthesis of uridine diphosphate/UDP-GlcNAc, which is a biosynthetic precursor of chitin and also supplies the amino sugars for N-linked oligosaccharides of glycoproteins. This chain is Probable phosphoacetylglucosamine mutase, found in Encephalitozoon cuniculi (strain GB-M1) (Microsporidian parasite).